A 369-amino-acid chain; its full sequence is Delta(12)-oleate desaturase (369 aa).

2 helical membrane passes run 41–61 (LLSD…YFPL) and 69–89 (IAWP…WVIA). Positions 90-94 (HECGH) match the Histidine box-1 motif. A helical membrane pass occupies residues 102-122 (LIDDIVGLFFHSALLVPYFSW). The Histidine box-2 motif lies at 126–130 (HRRHH). The next 3 helical transmembrane spans lie at 164 to 184 (LISL…FNMS), 207 to 227 (WIQV…LYRI), and 234 to 254 (FWVM…LVLI). A Histidine box-3 motif is present at residues 300–304 (HVVHH).

Belongs to the fatty acid desaturase type 1 family.

The protein localises to the membrane. It functions in the pathway lipid metabolism; polyunsaturated fatty acid biosynthesis. Its function is as follows. Delta(12)-fatty acid desaturase producing in a heterologous system linoleic acid (18:2(9Z,12Z)) and to a lower extent hexadecadienoic acid (16:2(9Z,12Z)). The protein is Delta(12)-oleate desaturase of Trichosanthes kirilowii (Chinese snake gourd).